The sequence spans 535 residues: MHRRDLLKQLAAGFLALAPGLTPSTASAVSPASAATEPFDEAWLRRRARALAAGPYRKRNTALPPPLAALGWDAYQSIGARADHALWAGQSLPFDARFFHLGLFFKSPVRMHEVAGGQSRVIAYDPAMFDYGKSGLDHAALPADLGFAGFRLTTRADPTRDVAAFLGASYFRAVGGQWQYGMSARGLAIDTGLRRAEEFPDFTEFWLVRPAPEADTLRVYALLDAPSVAGAYRFDIRPGDTLVMDVQATLFVRKPIERLGIAPLTSMFLYGENDRTDRAGDRQSAARRWRASDWRPEIHDSDGLAIWRGSGEWIWRPLANPPALRSQRFADDGPRGFGLLQRDRNPDHYQDDGVFYEKRPSVWVEPAHGWGEGAVELVELSAADETFDNIVAFWRPAVAPQAGQELAFGYRLSWGAQPPVAPPLARVVATRTGIGGIVGQPRRHFSWRFVIDFAGGELGQPGRAAVEPVIRVSRGRVEIVSARPLANIDGVRAMFDLVPDAGNAPIELQLTLQSGDRPLSETWAYQWTPPADRAV.

Residues 1–28 (MHRRDLLKQLAAGFLALAPGLTPSTASA) constitute a signal peptide (tat-type signal). Residues 275–287 (RTDRAGDRQSAAR) form an insert region.

It belongs to the OpgD/OpgG family. Post-translationally, predicted to be exported by the Tat system. The position of the signal peptide cleavage has not been experimentally proven.

The protein resides in the periplasm. It participates in glycan metabolism; osmoregulated periplasmic glucan (OPG) biosynthesis. In terms of biological role, probably involved in the control of the structural glucose backbone of osmoregulated periplasmic glucans (OPGs). The protein is Glucans biosynthesis protein D 1 (opgD1) of Ralstonia nicotianae (strain ATCC BAA-1114 / GMI1000) (Ralstonia solanacearum).